The sequence spans 84 residues: U21-theraphotoxin-Cg1a 1 (84 aa).

An N-terminal signal peptide occupies residues 1 to 21 (MKVSVLITLAVLGVMFLLTSA). Positions 22–47 (EERGSDQMDSPAWLKSMEIIFQSEER) are excised as a propeptide. Disulfide bonds link Cys-49–Cys-63, Cys-56–Cys-68, and Cys-62–Cys-76. Val-82 carries the valine amide modification.

Belongs to the neurotoxin 10 (Hwtx-1) family. 05 (F4a) subfamily. As to expression, expressed by the venom gland.

The protein localises to the secreted. In terms of biological role, probable ion channel inhibitor. The sequence is that of U21-theraphotoxin-Cg1a 1 from Chilobrachys guangxiensis (Chinese earth tiger tarantula).